A 334-amino-acid chain; its full sequence is N-acetyl-gamma-glutamyl-phosphate reductase (334 aa).

Cysteine 154 is an active-site residue.

Belongs to the NAGSA dehydrogenase family. Type 1 subfamily.

Its subcellular location is the cytoplasm. The catalysed reaction is N-acetyl-L-glutamate 5-semialdehyde + phosphate + NADP(+) = N-acetyl-L-glutamyl 5-phosphate + NADPH + H(+). It participates in amino-acid biosynthesis; L-arginine biosynthesis; N(2)-acetyl-L-ornithine from L-glutamate: step 3/4. In terms of biological role, catalyzes the NADPH-dependent reduction of N-acetyl-5-glutamyl phosphate to yield N-acetyl-L-glutamate 5-semialdehyde. The protein is N-acetyl-gamma-glutamyl-phosphate reductase of Vibrio parahaemolyticus serotype O3:K6 (strain RIMD 2210633).